The primary structure comprises 293 residues: Glycine N-methyltransferase (293 aa).

Position 2 is an N-acetylvaline (Val2). Residues Ser4 and Tyr6 each contribute to the (6S)-5-methyl-5,6,7,8-tetrahydrofolate site. Ser10 carries the phosphoserine modification. Tyr22, Trp31, Tyr34, and Arg41 together coordinate S-adenosyl-L-methionine. A Phosphotyrosine modification is found at Tyr34. Lys46 carries the post-translational modification N6-succinyllysine. S-adenosyl-L-methionine-binding positions include Ala65, 86–88 (DAS), 117–118 (NW), 137–140 (LGNS), and Arg176. Lys191, Lys196, and Lys201 each carry N6-succinyllysine. His215 contributes to the (6S)-5-methyl-5,6,7,8-tetrahydrofolate binding site. Tyr221 contributes to the S-adenosyl-L-methionine binding site. Arg240 serves as a coordination point for (6S)-5-methyl-5,6,7,8-tetrahydrofolate.

This sequence belongs to the class I-like SAM-binding methyltransferase superfamily. Glycine N-methyltransferase family. Homotetramer. As to expression, abundant in liver.

Its subcellular location is the cytoplasm. It carries out the reaction glycine + S-adenosyl-L-methionine = sarcosine + S-adenosyl-L-homocysteine + H(+). Its activity is regulated as follows. Inhibited by 5-methyltetrahydrofolate monoglutamate and by 5-methyltetrahydrofolate pentaglutamate, inhibition is much more effective by the pentaglutamate form than by the monoglutamate form. Two molecules of 5-methyltetrahydrofolate are bound per tetramer. The binding sites are localized between subunits. Inhibitor binding may preclude movements of the polypeptide chain that are necessary for enzyme activity. In terms of biological role, catalyzes the methylation of glycine by using S-adenosylmethionine (AdoMet) to form N-methylglycine (sarcosine) with the concomitant production of S-adenosylhomocysteine (AdoHcy), a reaction regulated by the binding of 5-methyltetrahydrofolate. Possible crucial role in the regulation of tissue concentration of AdoMet and of metabolism of methionine. The protein is Glycine N-methyltransferase (Gnmt) of Rattus norvegicus (Rat).